Here is a 322-residue protein sequence, read N- to C-terminus: MVQLALKEEKELTKEEIKELQKEVRRLAKEKNAVILAHYYQRPEVQDIADFVGDSLELARKASQTDADIIVFCGVRFMCETAKIVNPEKKVLHPNPESGCPMADMITAKQVRELREKHPDAEFVAYINTTADVKAEVDICVTSANAPKIIKKLEAKKIVFLPDQALGNWVAKQVPEKEFIIWKGFCPPHFEFTYKELEKLKEMYPDAKVAVHPECHPRVIELADFVGSTSQILKYATSVDAKRVIVVTEVGLKYTLEKINPNKEYIFPQSMNYCGTVYCCTMKGITLPKVYETLKNEINEVTLPKDIIERARRPIERMLELS.

The iminosuccinate site is built by histidine 38 and serine 55. Residue cysteine 100 coordinates [4Fe-4S] cluster. Iminosuccinate contacts are provided by residues 126–128 (YIN) and serine 143. [4Fe-4S] cluster is bound at residue cysteine 186. Residues 212-214 (HPE) and threonine 229 contribute to the iminosuccinate site. Residue cysteine 279 coordinates [4Fe-4S] cluster.

It belongs to the quinolinate synthase family. Type 2 subfamily. Requires [4Fe-4S] cluster as cofactor.

It is found in the cytoplasm. It carries out the reaction iminosuccinate + dihydroxyacetone phosphate = quinolinate + phosphate + 2 H2O + H(+). It participates in cofactor biosynthesis; NAD(+) biosynthesis; quinolinate from iminoaspartate: step 1/1. Catalyzes the condensation of iminoaspartate with dihydroxyacetone phosphate to form quinolinate. In Aquifex aeolicus (strain VF5), this protein is Quinolinate synthase.